Consider the following 262-residue polypeptide: Transcription factor Spi-B (262 aa).

The segment at 1-31 (MLALEAAQLDGPHFSCLYPDGVFYDLDSCKH) is TAD1 (Acidic). Positions 41 to 61 (PDSLWDWTVAPPVPATPYEAF) are TAD2. The interval 140-163 (ALEVSDSESDEALVAGPEGKGSEA) is disordered. Positions 169 to 252 (LRLYQFLLGL…VKRKLTYQFD (84 aa)) form a DNA-binding region, ETS.

Belongs to the ETS family. Can form homotypic interactions. Interacts with IRF4/Pip. Interacts with JUN. Interacts with TBP. May also interact with CREBBP and EP300. Interacts with NONO/p54(nrb). Expressed in plasmacytoid dendritic cells (pDCs) and B-cells, not expressed in T-cells or granulocytes. May also be enriched in stem cell populations of the liver.

It is found in the nucleus. It localises to the cytoplasm. Its function is as follows. Sequence specific transcriptional activator which binds to the PU-box, a purine-rich DNA sequence (5'-GAGGAA-3') that can act as a lymphoid-specific enhancer. Promotes development of plasmacytoid dendritic cells (pDCs), also known as type 2 DC precursors (pre-DC2) or natural interferon (IFN)-producing cells. These cells have the capacity to produce large amounts of interferon and block viral replication. May be required for B-cell receptor (BCR) signaling, which is necessary for normal B-cell development and antigenic stimulation. This chain is Transcription factor Spi-B (SPIB), found in Homo sapiens (Human).